The primary structure comprises 239 residues: Ribonuclease 3 (239 aa).

The 124-residue stretch at 18-141 (YLTLEKALGY…LMAGVYLEAG (124 aa)) folds into the RNase III domain. Glu54 provides a ligand contact to Mg(2+). Residue Asp58 is part of the active site. Mg(2+) is bound by residues Ser127 and Glu130. Glu130 is an active-site residue. The DRBM domain occupies 168–237 (DYKTALQELT…AYQALQKLKE (70 aa)).

This sequence belongs to the ribonuclease III family. In terms of assembly, homodimer. Mg(2+) serves as cofactor.

Its subcellular location is the cytoplasm. The enzyme catalyses Endonucleolytic cleavage to 5'-phosphomonoester.. Digests double-stranded RNA. Involved in the processing of primary rRNA transcript to yield the immediate precursors to the large and small rRNAs (23S and 16S). Processes some mRNAs, and tRNAs when they are encoded in the rRNA operon. Processes pre-crRNA and tracrRNA of type II CRISPR loci if present in the organism. The polypeptide is Ribonuclease 3 (Helicobacter pylori (strain P12)).